We begin with the raw amino-acid sequence, 409 residues long: Peptidase T (409 aa).

His-78 contacts Zn(2+). Residue Asp-80 is part of the active site. Asp-141 provides a ligand contact to Zn(2+). Residue Glu-175 is the Proton acceptor of the active site. Zn(2+) contacts are provided by Glu-176, Asp-198, and His-380.

Belongs to the peptidase M20B family. Zn(2+) is required as a cofactor.

The protein localises to the cytoplasm. The catalysed reaction is Release of the N-terminal residue from a tripeptide.. In terms of biological role, cleaves the N-terminal amino acid of tripeptides. This Caldanaerobacter subterraneus subsp. tengcongensis (strain DSM 15242 / JCM 11007 / NBRC 100824 / MB4) (Thermoanaerobacter tengcongensis) protein is Peptidase T.